The sequence spans 244 residues: Ubiquinone/menaquinone biosynthesis C-methyltransferase UbiE (244 aa).

S-adenosyl-L-methionine-binding positions include T70, D91, and 117–118 (DA).

This sequence belongs to the class I-like SAM-binding methyltransferase superfamily. MenG/UbiE family.

It catalyses the reaction a 2-demethylmenaquinol + S-adenosyl-L-methionine = a menaquinol + S-adenosyl-L-homocysteine + H(+). The catalysed reaction is a 2-methoxy-6-(all-trans-polyprenyl)benzene-1,4-diol + S-adenosyl-L-methionine = a 5-methoxy-2-methyl-3-(all-trans-polyprenyl)benzene-1,4-diol + S-adenosyl-L-homocysteine + H(+). It participates in quinol/quinone metabolism; menaquinone biosynthesis; menaquinol from 1,4-dihydroxy-2-naphthoate: step 2/2. It functions in the pathway cofactor biosynthesis; ubiquinone biosynthesis. In terms of biological role, methyltransferase required for the conversion of demethylmenaquinol (DMKH2) to menaquinol (MKH2) and the conversion of 2-polyprenyl-6-methoxy-1,4-benzoquinol (DDMQH2) to 2-polyprenyl-3-methyl-6-methoxy-1,4-benzoquinol (DMQH2). The protein is Ubiquinone/menaquinone biosynthesis C-methyltransferase UbiE of Laribacter hongkongensis (strain HLHK9).